Consider the following 352-residue polypeptide: Protein NDRG4 (352 aa).

Ser298, Ser317, and Ser323 each carry phosphoserine. Positions 314-323 (RTASLTSASS) are enriched in low complexity. The segment at 314–352 (RTASLTSASSVDGSRPQACTHSESSEGLGQVNHTMEVSC) is disordered. Residues 330–352 (QACTHSESSEGLGQVNHTMEVSC) show a composition bias toward polar residues.

The protein belongs to the NDRG family. Phosphorylated in an aortic smooth muscle cell line, following PDGF treatment. In terms of tissue distribution, expressed predominantly in brain and heart (at protein level). In the brain, detected in astrocytes. Isoform 1 and isoform 2 are only expressed in brain. Isoform 3 is expressed in both heart and brain. Up-regulated in glioblastoma multiforme cells.

The protein localises to the cytoplasm. The protein resides in the cytosol. In terms of biological role, contributes to the maintenance of intracerebral BDNF levels within the normal range, which is necessary for the preservation of spatial learning and the resistance to neuronal cell death caused by ischemic stress. May enhance growth factor-induced ERK1 and ERK2 phosphorylation, including that induced by PDGF and FGF. May attenuate NGF-promoted ELK1 phosphorylation in a microtubule-dependent manner. In Homo sapiens (Human), this protein is Protein NDRG4 (NDRG4).